We begin with the raw amino-acid sequence, 123 residues long: Small ribosomal subunit protein uS12 (123 aa).

The disordered stretch occupies residues 1–29; it reads MPTINQLVRKGRVPQKAKSKVPAMEQNPQ. Residues 9–19 show a composition bias toward basic residues; the sequence is RKGRVPQKAKS. Asp-89 carries the post-translational modification 3-methylthioaspartic acid.

This sequence belongs to the universal ribosomal protein uS12 family. Part of the 30S ribosomal subunit. Contacts proteins S8 and S17. May interact with IF1 in the 30S initiation complex.

Functionally, with S4 and S5 plays an important role in translational accuracy. In terms of biological role, interacts with and stabilizes bases of the 16S rRNA that are involved in tRNA selection in the A site and with the mRNA backbone. Located at the interface of the 30S and 50S subunits, it traverses the body of the 30S subunit contacting proteins on the other side and probably holding the rRNA structure together. The combined cluster of proteins S8, S12 and S17 appears to hold together the shoulder and platform of the 30S subunit. In Erythrobacter litoralis (strain HTCC2594), this protein is Small ribosomal subunit protein uS12.